Here is a 156-residue protein sequence, read N- to C-terminus: Protein E6 (156 aa).

2 zinc fingers span residues 40–76 and 113–149; these read CNFC…CRLC and CHTC…CRQC.

It belongs to the papillomaviridae E6 protein family. As to quaternary structure, forms homodimers. Interacts with ubiquitin-protein ligase UBE3A/E6-AP; this interaction stimulates UBE3A ubiquitin activity. Interacts with host BAK1.

It localises to the host cytoplasm. The protein localises to the host nucleus. Its function is as follows. Plays a major role in the induction and maintenance of cellular transformation. E6 associates with host UBE3A/E6-AP ubiquitin-protein ligase and modulates its activity. Protects host keratinocytes from apoptosis by mediating the degradation of host BAK1. May also inhibit host immune response. This Homo sapiens (Human) protein is Protein E6.